Reading from the N-terminus, the 111-residue chain is Secreted RxLR effector protein 159 (111 aa).

The first 21 residues, 1–21, serve as a signal peptide directing secretion; the sequence is MRGAYYVAIAFLVAASSRTAA. The RxLR-dEER signature appears at 50–71; the sequence is RVLRGSRDLKDKLAVYANDEQR. N-linked (GlcNAc...) asparagine glycosylation is present at Asn81.

It belongs to the RxLR effector family.

The protein resides in the secreted. Its subcellular location is the host nucleus. It localises to the host cytoplasm. In terms of biological role, secreted effector that completely suppresses the host cell death induced by cell death-inducing proteins. This chain is Secreted RxLR effector protein 159, found in Plasmopara viticola (Downy mildew of grapevine).